Consider the following 134-residue polypeptide: Salivary protein 15 Iric-1 (134 aa).

Positions M1–V21 are cleaved as a signal peptide. N-linked (GlcNAc...) asparagine glycosylation occurs at N22. The interval P48–N67 is required for Borrelia OspC-binding. Residues N91 and N103 are each glycosylated (N-linked (GlcNAc...) asparagine). The segment at G115–C134 is CD4-binding.

Belongs to the salp15 family. As to quaternary structure, monomer. Interacts with host CD4. Interacts with host DC-SIGN (CD209). (Microbial infection) Interacts with Borrelia outer surface protein C (OspC). As to expression, expressed in salivary glands. Detected in fed adult female.

The protein localises to the secreted. Its function is as follows. Salivary tick protein that downregulates host immune system by binding to both dendritic cells, and CD4(+) T cells. Specifically binds to the CD4 coreceptor on T cells. This interaction prevents the activation of the Src kinase, Lck, and its downstream substrate Zap-70, and results in deficient activation of PLCgamma1, the repression of calcium fluxes triggered by T-cell antigen receptor (TCR) ligation, and a subsequent reduction in interleukin-2 production. This salivary protein also binds to DC-SIGN (CD209) on dendritic cells (DC) and activates the Raf-1 kinase/MEK signaling pathway that results in down-regulating expression of pro-inflammatory cytokines. Furthermore, it inhibits T cell proliferation induced by DCs. In addition, it inhibits in vitro keratinocyte inflammation induced by Borrelia burgdorferi or by the major outer surface protein (OspC) of Borrelia. In addition, it downregulates chemokines and monocyte chemoattractant protein 1, as well as several antimicrobial peptides such as defensins, cathelicidin, psoriasin, and RNase 7. Apart from its immunomodulatory activities, it is also associated with protection of Borrelia spirochetes from antibody-mediated killing through its binding to OspC. In vivo, tests on different immune disease animal models show promising therapeutic results, e.g., in inhibiting HIV infection, experimental autoimmune encephalomyelitis, transplantation rejection, and asthma. In terms of biological role, (Microbial infection) Protects Borrelia garinii (strain VSBP) from host complement-mediated killing by binding to the surface of spirochetes and preventing deposition of host C5b-9 membrane attack complexes. Protects Borrelia garinii (strain A87S) from host complement-mediated killing. Functionally, (Microbial infection) Partially protects Borrelia burgdorferi (strains VS215 and B31) from host complement-mediated killing. This Ixodes ricinus (Common tick) protein is Salivary protein 15 Iric-1.